The following is a 637-amino-acid chain: Probable potassium transport system protein Kup (637 aa).

12 helical membrane passes run 24-44 (LAIA…LYAL), 64-84 (VISL…LLFV), 113-133 (AGAL…DAVI), 151-171 (PHLS…LFWI), 182-202 (LFGP…VYHI), 225-245 (LLQA…AEAL), 261-281 (AYGL…ALLI), 290-310 (PFFL…STVA), 351-371 (IYVP…VIGF), 381-401 (YGIA…VVMV), 409-429 (LLVG…FGAN), and 433-453 (VAQG…LLMT).

This sequence belongs to the HAK/KUP transporter (TC 2.A.72) family.

The protein localises to the cell inner membrane. The enzyme catalyses K(+)(in) + H(+)(in) = K(+)(out) + H(+)(out). Transport of potassium into the cell. Likely operates as a K(+):H(+) symporter. This is Probable potassium transport system protein Kup from Burkholderia ambifaria (strain ATCC BAA-244 / DSM 16087 / CCUG 44356 / LMG 19182 / AMMD) (Burkholderia cepacia (strain AMMD)).